Reading from the N-terminus, the 396-residue chain is Small ribosomal subunit protein uS9m (396 aa).

The disordered stretch occupies residues 374 to 396 (PRVRERKKPGQEGARRKFTWKKR).

The protein belongs to the universal ribosomal protein uS9 family. As to quaternary structure, component of the mitochondrial ribosome small subunit (28S) which comprises a 12S rRNA and about 30 distinct proteins.

It is found in the mitochondrion. The polypeptide is Small ribosomal subunit protein uS9m (MRPS9) (Bos taurus (Bovine)).